We begin with the raw amino-acid sequence, 191 residues long: dCTP deaminase, dUMP-forming (191 aa).

DCTP contacts are provided by residues 101 to 106, Asp-119, 127 to 129, Gln-148, Tyr-162, and Gln-174; these read KSSLGR and TLE. Catalysis depends on Glu-129, which acts as the Proton donor/acceptor. Positions 163–191 are disordered; that stretch reads GSPVYGSRYQGQRGPTPSRSWQNFHRTKI. Over residues 171-191 the composition is skewed to polar residues; the sequence is YQGQRGPTPSRSWQNFHRTKI.

Belongs to the dCTP deaminase family. In terms of assembly, homotrimer.

The enzyme catalyses dCTP + 2 H2O = dUMP + NH4(+) + diphosphate. It functions in the pathway pyrimidine metabolism; dUMP biosynthesis; dUMP from dCTP: step 1/1. Bifunctional enzyme that catalyzes both the deamination of dCTP to dUTP and the hydrolysis of dUTP to dUMP without releasing the toxic dUTP intermediate. The chain is dCTP deaminase, dUMP-forming from Acidothermus cellulolyticus (strain ATCC 43068 / DSM 8971 / 11B).